Reading from the N-terminus, the 464-residue chain is UDP-N-acetylmuramate--L-alanine ligase (464 aa).

Gly-112–Thr-118 lines the ATP pocket.

This sequence belongs to the MurCDEF family.

The protein localises to the cytoplasm. The catalysed reaction is UDP-N-acetyl-alpha-D-muramate + L-alanine + ATP = UDP-N-acetyl-alpha-D-muramoyl-L-alanine + ADP + phosphate + H(+). The protein operates within cell wall biogenesis; peptidoglycan biosynthesis. Cell wall formation. This Acidithiobacillus ferrooxidans (strain ATCC 23270 / DSM 14882 / CIP 104768 / NCIMB 8455) (Ferrobacillus ferrooxidans (strain ATCC 23270)) protein is UDP-N-acetylmuramate--L-alanine ligase.